Reading from the N-terminus, the 330-residue chain is Ribosomal RNA small subunit methyltransferase C (330 aa).

The protein belongs to the methyltransferase superfamily. RsmC family. Monomer.

It is found in the cytoplasm. It carries out the reaction guanosine(1207) in 16S rRNA + S-adenosyl-L-methionine = N(2)-methylguanosine(1207) in 16S rRNA + S-adenosyl-L-homocysteine + H(+). Its function is as follows. Specifically methylates the guanine in position 1207 of 16S rRNA in the 30S particle. This Haemophilus influenzae (strain PittGG) protein is Ribosomal RNA small subunit methyltransferase C.